Reading from the N-terminus, the 372-residue chain is Glutamate 5-kinase (372 aa).

An ATP-binding site is contributed by K14. Residues S54, D141, and N153 each coordinate substrate. 173-174 (TD) provides a ligand contact to ATP. Positions 280-358 (RGNVTLDEGA…DEIESLLGYI (79 aa)) constitute a PUA domain.

It belongs to the glutamate 5-kinase family.

The protein resides in the cytoplasm. It catalyses the reaction L-glutamate + ATP = L-glutamyl 5-phosphate + ADP. Its pathway is amino-acid biosynthesis; L-proline biosynthesis; L-glutamate 5-semialdehyde from L-glutamate: step 1/2. Catalyzes the transfer of a phosphate group to glutamate to form L-glutamate 5-phosphate. The sequence is that of Glutamate 5-kinase from Nitrosospira multiformis (strain ATCC 25196 / NCIMB 11849 / C 71).